A 399-amino-acid chain; its full sequence is S-adenosylmethionine synthase (399 aa).

ATP is bound at residue 135-140 (GEGSTD).

This sequence belongs to the AdoMet synthase 2 family. The cofactor is Mg(2+).

It catalyses the reaction L-methionine + ATP + H2O = S-adenosyl-L-methionine + phosphate + diphosphate. The protein operates within amino-acid biosynthesis; S-adenosyl-L-methionine biosynthesis; S-adenosyl-L-methionine from L-methionine: step 1/1. Its function is as follows. Catalyzes the formation of S-adenosylmethionine from methionine and ATP. The chain is S-adenosylmethionine synthase (mat) from Archaeoglobus fulgidus (strain ATCC 49558 / DSM 4304 / JCM 9628 / NBRC 100126 / VC-16).